Here is a 201-residue protein sequence, read N- to C-terminus: Orotate phosphoribosyltransferase (201 aa).

Residue E113–S121 coordinates 5-phospho-alpha-D-ribose 1-diphosphate. Positions 117 and 145 each coordinate orotate.

Belongs to the purine/pyrimidine phosphoribosyltransferase family. PyrE subfamily. In terms of assembly, homodimer. Mg(2+) is required as a cofactor.

It carries out the reaction orotidine 5'-phosphate + diphosphate = orotate + 5-phospho-alpha-D-ribose 1-diphosphate. It functions in the pathway pyrimidine metabolism; UMP biosynthesis via de novo pathway; UMP from orotate: step 1/2. Functionally, catalyzes the transfer of a ribosyl phosphate group from 5-phosphoribose 1-diphosphate to orotate, leading to the formation of orotidine monophosphate (OMP). The polypeptide is Orotate phosphoribosyltransferase (Helicobacter pylori (strain P12)).